The sequence spans 425 residues: Enolase (425 aa).

(2R)-2-phosphoglycerate is bound at residue Gln-162. The active-site Proton donor is the Glu-204. Positions 241, 282, and 309 each coordinate Mg(2+). The (2R)-2-phosphoglycerate site is built by Lys-334, Arg-363, Ser-364, and Lys-385. The Proton acceptor role is filled by Lys-334.

This sequence belongs to the enolase family. It depends on Mg(2+) as a cofactor.

It is found in the cytoplasm. The protein localises to the secreted. It localises to the cell surface. It carries out the reaction (2R)-2-phosphoglycerate = phosphoenolpyruvate + H2O. It participates in carbohydrate degradation; glycolysis; pyruvate from D-glyceraldehyde 3-phosphate: step 4/5. Catalyzes the reversible conversion of 2-phosphoglycerate (2-PG) into phosphoenolpyruvate (PEP). It is essential for the degradation of carbohydrates via glycolysis. This Micrococcus luteus (strain ATCC 4698 / DSM 20030 / JCM 1464 / CCM 169 / CCUG 5858 / IAM 1056 / NBRC 3333 / NCIMB 9278 / NCTC 2665 / VKM Ac-2230) (Micrococcus lysodeikticus) protein is Enolase.